The following is a 358-amino-acid chain: Alanine racemase (358 aa).

Lys-34 acts as the Proton acceptor; specific for D-alanine in catalysis. The residue at position 34 (Lys-34) is an N6-(pyridoxal phosphate)lysine. Arg-130 lines the substrate pocket. The Proton acceptor; specific for L-alanine role is filled by Tyr-254. Substrate is bound at residue Met-302.

It belongs to the alanine racemase family. Pyridoxal 5'-phosphate serves as cofactor.

The enzyme catalyses L-alanine = D-alanine. The protein operates within amino-acid biosynthesis; D-alanine biosynthesis; D-alanine from L-alanine: step 1/1. Functionally, catalyzes the interconversion of L-alanine and D-alanine. May also act on other amino acids. In Actinobacillus succinogenes (strain ATCC 55618 / DSM 22257 / CCUG 43843 / 130Z), this protein is Alanine racemase (alr).